The primary structure comprises 551 residues: MPAKQVAFAEHAREKMLRGVNVLADAVKVTLGPKGRNVVLDKSFGAPTITKDGVSVAKEIELADKFENMGAQMVKEVASQASDEAGDGTTTATVLAQAIIREGLKAVIAGMNPMDLKRGIDKSVIVVVEELKKQSKPCKTQKEVAQVGTISANSDDSIGKIIAEAMEKVGNEGVITVEEGSGLANELDVVEGMQFDRGYLSPYFVNNQDKMVAELENPYILLHDKKISSIRDMLPILEQVAKSSRPLLIVAEDVEGEALATLVVNTMRGIIKVAAVKAPGFGDRRKAMLEDMAILTGGRVVSEEIGMKLESTTLADLGQAKKIVIDKENTTMIDGAGQQSEIKARVEQIRRQMEDASSDYDREKLQERVAKLAGGVAVIKVGAGSEMEMKEKKARVEDALHATRAAVEEGIVPGGGVALVRARHALEGFKTANHDQDMGVAIIRRAIEEPLRQIVANAGGEGSVVLNKVVDGKDGYGYNAATDEYGDMFEMGVIDPTKVTRTALQKASSIAGLMITTEAMVTELPKKDDKSGGDMGDMGGGMGGMGGMGGF.

ATP contacts are provided by residues 30–33, Lys51, 87–91, Gly415, 479–481, and Asp495; these read TLGP, DGTTT, and NAA.

It belongs to the chaperonin (HSP60) family. Forms a cylinder of 14 subunits composed of two heptameric rings stacked back-to-back. Interacts with the co-chaperonin GroES.

It is found in the cytoplasm. The enzyme catalyses ATP + H2O + a folded polypeptide = ADP + phosphate + an unfolded polypeptide.. In terms of biological role, together with its co-chaperonin GroES, plays an essential role in assisting protein folding. The GroEL-GroES system forms a nano-cage that allows encapsulation of the non-native substrate proteins and provides a physical environment optimized to promote and accelerate protein folding. The protein is Chaperonin GroEL of Acidithiobacillus ferrooxidans (strain ATCC 23270 / DSM 14882 / CIP 104768 / NCIMB 8455) (Ferrobacillus ferrooxidans (strain ATCC 23270)).